We begin with the raw amino-acid sequence, 177 residues long: Dual-action ribosomal maturation protein DarP (177 aa).

Residues 1–26 (MKIVGDSEHFKQPYDSDEEYVSKTED) form a disordered region.

It belongs to the DarP family.

It is found in the cytoplasm. Its function is as follows. Member of a network of 50S ribosomal subunit biogenesis factors which assembles along the 30S-50S interface, preventing incorrect 23S rRNA structures from forming. Promotes peptidyl transferase center (PTC) maturation. The protein is Dual-action ribosomal maturation protein DarP of Shewanella sp. (strain MR-4).